We begin with the raw amino-acid sequence, 338 residues long: Protein SPATA31F3 (338 aa).

The chain crosses the membrane as a helical span at residues 7 to 29 (VLWDVGYPLYTYGSICIIALIIW). A Phosphoserine modification is found at serine 152. Over residues 290-306 (DRTKNIEKSPTVTKDHV) the composition is skewed to basic and acidic residues. Positions 290–338 (DRTKNIEKSPTVTKDHVWGATTQKTTEDPEAQPPSTEEEGLIFCDAPSA) are disordered.

The protein belongs to the SPATA31 family.

The protein resides in the membrane. In Homo sapiens (Human), this protein is Protein SPATA31F3.